Consider the following 958-residue polypeptide: Valine--tRNA ligase (958 aa).

A 'HIGH' region motif is present at residues 45 to 55 (PNVTGSLHMGH). A 'KMSKS' region motif is present at residues 571–575 (KMSKS). ATP is bound at residue Lys574. The stretch at 892-958 (AAERTRLDKE…EALERLKQAS (67 aa)) forms a coiled coil.

Belongs to the class-I aminoacyl-tRNA synthetase family. ValS type 1 subfamily. As to quaternary structure, monomer.

Its subcellular location is the cytoplasm. It catalyses the reaction tRNA(Val) + L-valine + ATP = L-valyl-tRNA(Val) + AMP + diphosphate. Functionally, catalyzes the attachment of valine to tRNA(Val). As ValRS can inadvertently accommodate and process structurally similar amino acids such as threonine, to avoid such errors, it has a 'posttransfer' editing activity that hydrolyzes mischarged Thr-tRNA(Val) in a tRNA-dependent manner. The polypeptide is Valine--tRNA ligase (Bradyrhizobium diazoefficiens (strain JCM 10833 / BCRC 13528 / IAM 13628 / NBRC 14792 / USDA 110)).